Reading from the N-terminus, the 114-residue chain is U-myrmeciitoxin(01)-Mg8a (114 aa).

The signal sequence occupies residues 1–20; that stretch reads MKLSTLLVAFVLLVITVILS. Residues 21–44 constitute a propeptide that is removed on maturation; sequence TPSTNAKALAESNALAVAVSEAEP.

This sequence belongs to the formicidae venom precursor-01 superfamily. As to expression, expressed by the venom gland.

The protein localises to the secreted. Functionally, may have antimicrobial properties, like most ant linear peptides. The polypeptide is U-myrmeciitoxin(01)-Mg8a (Myrmecia gulosa (Red bulldog ant)).